Consider the following 431-residue polypeptide: Ubiquitin-like modifier-activating enzyme 5 (431 aa).

Residues glycine 92, aspartate 113, lysine 136, asparagine 159, and asparagine 197 each coordinate ATP. Positions 239 and 242 each coordinate Zn(2+). Catalysis depends on cysteine 263, which acts as the Glycyl thioester intermediate. Residues cysteine 316 and cysteine 321 each coordinate Zn(2+). Residues 339-396 (AKAKMEADASTTIDEGPLHDDNEWNISVVDDENEKDTTKAASSSDTLPEGLTRELPVA) form a disordered region.

It belongs to the ubiquitin-activating E1 family. UBA5 subfamily.

E1-like enzyme which activates UFM1. The polypeptide is Ubiquitin-like modifier-activating enzyme 5 (Arabidopsis thaliana (Mouse-ear cress)).